We begin with the raw amino-acid sequence, 392 residues long: Putative F-box protein At1g71320 (392 aa).

Positions 8-55 (NPKTIFIPDDIAEGIFHHLPIKSLARFKVLSKKWTSMIESTYFSHKRL) constitute an F-box domain.

This is Putative F-box protein At1g71320 from Arabidopsis thaliana (Mouse-ear cress).